The following is a 229-amino-acid chain: Uracil-DNA glycosylase (229 aa).

Asp65 acts as the Proton acceptor in catalysis.

Belongs to the uracil-DNA glycosylase (UDG) superfamily. UNG family.

It localises to the cytoplasm. The enzyme catalyses Hydrolyzes single-stranded DNA or mismatched double-stranded DNA and polynucleotides, releasing free uracil.. Excises uracil residues from the DNA which can arise as a result of misincorporation of dUMP residues by DNA polymerase or due to deamination of cytosine. This chain is Uracil-DNA glycosylase, found in Oceanobacillus iheyensis (strain DSM 14371 / CIP 107618 / JCM 11309 / KCTC 3954 / HTE831).